A 169-amino-acid chain; its full sequence is Ribosome maturation factor RimM (169 aa).

Residues 93–166 (GEHEFYYHEI…RIQITPLPGL (74 aa)) form the PRC barrel domain.

It belongs to the RimM family. As to quaternary structure, binds ribosomal protein uS19.

The protein localises to the cytoplasm. An accessory protein needed during the final step in the assembly of 30S ribosomal subunit, possibly for assembly of the head region. Essential for efficient processing of 16S rRNA. May be needed both before and after RbfA during the maturation of 16S rRNA. It has affinity for free ribosomal 30S subunits but not for 70S ribosomes. The chain is Ribosome maturation factor RimM from Exiguobacterium sibiricum (strain DSM 17290 / CCUG 55495 / CIP 109462 / JCM 13490 / 255-15).